Here is a 339-residue protein sequence, read N- to C-terminus: Ketol-acid reductoisomerase (NADP(+)) (339 aa).

In terms of domain architecture, KARI N-terminal Rossmann spans 1 to 182 (MRVYYDRDAD…GGGRAGIIET (182 aa)). Residues 24 to 27 (YGSQ), arginine 48, serine 51, threonine 53, and 83 to 86 (DELQ) each bind NADP(+). Residue histidine 108 is part of the active site. Glycine 134 serves as a coordination point for NADP(+). Positions 183-328 (TFREECETDL…AKLREMMPWI (146 aa)) constitute a KARI C-terminal knotted domain. The Mg(2+) site is built by aspartate 191, glutamate 195, glutamate 227, and glutamate 231. Serine 252 contributes to the substrate binding site.

It belongs to the ketol-acid reductoisomerase family. The cofactor is Mg(2+).

It carries out the reaction (2R)-2,3-dihydroxy-3-methylbutanoate + NADP(+) = (2S)-2-acetolactate + NADPH + H(+). The enzyme catalyses (2R,3R)-2,3-dihydroxy-3-methylpentanoate + NADP(+) = (S)-2-ethyl-2-hydroxy-3-oxobutanoate + NADPH + H(+). Its pathway is amino-acid biosynthesis; L-isoleucine biosynthesis; L-isoleucine from 2-oxobutanoate: step 2/4. It functions in the pathway amino-acid biosynthesis; L-valine biosynthesis; L-valine from pyruvate: step 2/4. Involved in the biosynthesis of branched-chain amino acids (BCAA). Catalyzes an alkyl-migration followed by a ketol-acid reduction of (S)-2-acetolactate (S2AL) to yield (R)-2,3-dihydroxy-isovalerate. In the isomerase reaction, S2AL is rearranged via a Mg-dependent methyl migration to produce 3-hydroxy-3-methyl-2-ketobutyrate (HMKB). In the reductase reaction, this 2-ketoacid undergoes a metal-dependent reduction by NADPH to yield (R)-2,3-dihydroxy-isovalerate. In Rhodopseudomonas palustris (strain BisA53), this protein is Ketol-acid reductoisomerase (NADP(+)).